The sequence spans 264 residues: 3-methyl-2-oxobutanoate hydroxymethyltransferase (264 aa).

Mg(2+) contacts are provided by Asp45 and Asp84. Residues 45 to 46 (DS), Asp84, and Lys112 contribute to the 3-methyl-2-oxobutanoate site. Residue Glu114 coordinates Mg(2+). The Proton acceptor role is filled by Glu181.

This sequence belongs to the PanB family. In terms of assembly, homodecamer; pentamer of dimers. The cofactor is Mg(2+).

The protein resides in the cytoplasm. The enzyme catalyses 3-methyl-2-oxobutanoate + (6R)-5,10-methylene-5,6,7,8-tetrahydrofolate + H2O = 2-dehydropantoate + (6S)-5,6,7,8-tetrahydrofolate. It functions in the pathway cofactor biosynthesis; (R)-pantothenate biosynthesis; (R)-pantoate from 3-methyl-2-oxobutanoate: step 1/2. Its function is as follows. Catalyzes the reversible reaction in which hydroxymethyl group from 5,10-methylenetetrahydrofolate is transferred onto alpha-ketoisovalerate to form ketopantoate. The protein is 3-methyl-2-oxobutanoate hydroxymethyltransferase of Pseudoalteromonas translucida (strain TAC 125).